The primary structure comprises 109 residues: Iron-sulfur cluster assembly protein CyaY (109 aa).

Belongs to the frataxin family.

Involved in iron-sulfur (Fe-S) cluster assembly. May act as a regulator of Fe-S biogenesis. In Shewanella sp. (strain ANA-3), this protein is Iron-sulfur cluster assembly protein CyaY.